Here is a 121-residue protein sequence, read N- to C-terminus: Spermidine export protein MdtJ (121 aa).

4 consecutive transmembrane segments (helical) span residues 1–21 (MYIYWILLGLAIATEITGTLS), 32–52 (GGFILMLVMISLSYIFLSFAV), 55–75 (IALGVAYALWEGIGILFITLF), and 82–102 (ESLSLMKIAGLTTLVAGIVLI).

Belongs to the drug/metabolite transporter (DMT) superfamily. Small multidrug resistance (SMR) (TC 2.A.7.1) family. MdtJ subfamily. Forms a complex with MdtI.

It localises to the cell inner membrane. Catalyzes the excretion of spermidine. This chain is Spermidine export protein MdtJ, found in Escherichia coli O139:H28 (strain E24377A / ETEC).